Consider the following 78-residue polypeptide: Small ribosomal subunit protein uS17 (78 aa).

This sequence belongs to the universal ribosomal protein uS17 family. Part of the 30S ribosomal subunit.

Functionally, one of the primary rRNA binding proteins, it binds specifically to the 5'-end of 16S ribosomal RNA. This is Small ribosomal subunit protein uS17 from Wolbachia pipientis wMel.